Consider the following 248-residue polypeptide: Probable transcriptional regulatory protein Mpop_0922 (248 aa).

It belongs to the TACO1 family.

It localises to the cytoplasm. This chain is Probable transcriptional regulatory protein Mpop_0922, found in Methylorubrum populi (strain ATCC BAA-705 / NCIMB 13946 / BJ001) (Methylobacterium populi).